Here is a 189-residue protein sequence, read N- to C-terminus: Prostaglandin-H2 D-isomerase (189 aa).

The first 24 residues, 1–24, serve as a signal peptide directing secretion; the sequence is MATPSSLWLGLALLGTLGVLQTPA. Gln25 carries the pyrrolidone carboxylic acid modification. N-linked (GlcNAc...) asparagine glycosylation is present at Asn49. Cys63 functions as the Nucleophile in the catalytic mechanism. Asn76 carries N-linked (GlcNAc...) asparagine glycosylation. A disulfide bridge connects residues Cys87 and Cys184.

It belongs to the calycin superfamily. Lipocalin family. Monomer. In terms of tissue distribution, abundant in the brain and CNS, where it is expressed in tissues of the blood-brain barrier and secreted into the cerebro-spinal fluid.

Its subcellular location is the rough endoplasmic reticulum. The protein resides in the nucleus membrane. It localises to the golgi apparatus. It is found in the cytoplasm. The protein localises to the perinuclear region. Its subcellular location is the secreted. It carries out the reaction prostaglandin H2 = prostaglandin D2. In terms of biological role, catalyzes the conversion of PGH2 to PGD2, a prostaglandin involved in smooth muscle contraction/relaxation and a potent inhibitor of platelet aggregation. Involved in a variety of CNS functions, such as sedation, NREM sleep and PGE2-induced allodynia, and may have an anti-apoptotic role in oligodendrocytes. Binds small non-substrate lipophilic molecules, including biliverdin, bilirubin, retinal, retinoic acid and thyroid hormone, and may act as a scavenger for harmful hydrophobic molecules and as a secretory retinoid and thyroid hormone transporter. Possibly involved in development and maintenance of the blood-brain, blood-retina, blood-aqueous humor and blood-testis barrier. It is likely to play important roles in both maturation and maintenance of the central nervous system and male reproductive system. Involved in PLA2G3-dependent maturation of mast cells. PLA2G3 is secreted by immature mast cells and acts on nearby fibroblasts upstream to PTDGS to synthesize PGD2, which in turn promotes mast cell maturation and degranulation via PTGDR. This chain is Prostaglandin-H2 D-isomerase (PTGDS), found in Sus scrofa (Pig).